The primary structure comprises 332 residues: Glycerol-3-phosphate dehydrogenase [NAD(P)+] (332 aa).

4 residues coordinate NADPH: serine 11, phenylalanine 12, lysine 32, and lysine 106. Sn-glycerol 3-phosphate-binding residues include lysine 106, glycine 137, and serine 139. Alanine 141 contacts NADPH. Lysine 192, aspartate 245, serine 255, arginine 256, and asparagine 257 together coordinate sn-glycerol 3-phosphate. Catalysis depends on lysine 192, which acts as the Proton acceptor. Arginine 256 is an NADPH binding site. NADPH-binding residues include valine 280 and glutamate 282.

Belongs to the NAD-dependent glycerol-3-phosphate dehydrogenase family.

It localises to the cytoplasm. The catalysed reaction is sn-glycerol 3-phosphate + NAD(+) = dihydroxyacetone phosphate + NADH + H(+). It carries out the reaction sn-glycerol 3-phosphate + NADP(+) = dihydroxyacetone phosphate + NADPH + H(+). The protein operates within membrane lipid metabolism; glycerophospholipid metabolism. In terms of biological role, catalyzes the reduction of the glycolytic intermediate dihydroxyacetone phosphate (DHAP) to sn-glycerol 3-phosphate (G3P), the key precursor for phospholipid synthesis. This Staphylococcus epidermidis (strain ATCC 12228 / FDA PCI 1200) protein is Glycerol-3-phosphate dehydrogenase [NAD(P)+].